The primary structure comprises 506 residues: NAD(P)H-quinone oxidoreductase subunit 2, chloroplastic (506 aa).

A run of 13 helical transmembrane segments spans residues 15 to 35 (LIPEGIVACTILLVLLLDLVY), 39 to 59 (CHAWLAWVAMAGLSLASVLLG), 84 to 104 (LSLVFRAIIAMSCVLCILLSI), 113 to 133 (APSEFLVLIATASLGGMLVAG), 137 to 157 (LLMMFVSLETLGLASYLLTGY), 172 to 192 (LLVGAASSGLFLYGISWMYGI), 217 to 237 (CALALVLMTVGVGFKVAAAPF), 249 to 269 (PTPVVAFLSVGSKAAGFILAV), 283 to 303 (WHLIFTILSILSMIVGNFIAV), 339 to 359 (IVYLLIYLFMNLGAFACVILF), 382 to 402 (ALCLSLCLLSLGGIPPLAGFF), 418 to 438 (SLVWVGLITSVVSIYYYLSVV), and 471 to 491 (VGIFVCVLGSILVGVAGNSMV).

This sequence belongs to the complex I subunit 2 family. NDH is composed of at least 16 different subunits, 5 of which are encoded in the nucleus.

The protein resides in the plastid. It localises to the chloroplast thylakoid membrane. The catalysed reaction is a plastoquinone + NADH + (n+1) H(+)(in) = a plastoquinol + NAD(+) + n H(+)(out). The enzyme catalyses a plastoquinone + NADPH + (n+1) H(+)(in) = a plastoquinol + NADP(+) + n H(+)(out). NDH shuttles electrons from NAD(P)H:plastoquinone, via FMN and iron-sulfur (Fe-S) centers, to quinones in the photosynthetic chain and possibly in a chloroplast respiratory chain. The immediate electron acceptor for the enzyme in this species is believed to be plastoquinone. Couples the redox reaction to proton translocation, and thus conserves the redox energy in a proton gradient. This is NAD(P)H-quinone oxidoreductase subunit 2, chloroplastic from Nephroselmis olivacea (Green alga).